A 350-amino-acid polypeptide reads, in one-letter code: Probable deoxyhypusine synthase (350 aa).

Residues 96–100 (SNLIS), 122–124 (TAG), E128, and D229 contribute to the NAD(+) site. 127-128 (EE) is a binding site for spermidine. D234 is a binding site for spermidine. G276 lines the NAD(+) pocket. A spermidine-binding site is contributed by H281. Position 301–302 (301–302 (SA)) interacts with NAD(+). Residues 307-309 (GSD) and 316-322 (EAVSWGK) contribute to the spermidine site. K322 (nucleophile) is an active-site residue. 335 to 336 (EV) contributes to the NAD(+) binding site.

The protein belongs to the deoxyhypusine synthase family. The cofactor is NAD(+).

The catalysed reaction is [eIF5A protein]-L-lysine + spermidine = [eIF5A protein]-deoxyhypusine + propane-1,3-diamine. The protein operates within protein modification; eIF5A hypusination. In terms of biological role, catalyzes the NAD-dependent oxidative cleavage of spermidine and the subsequent transfer of the butylamine moiety of spermidine to the epsilon-amino group of a specific lysine residue of the eIF-5A precursor protein to form the intermediate deoxyhypusine residue. This chain is Probable deoxyhypusine synthase, found in Schizosaccharomyces pombe (strain 972 / ATCC 24843) (Fission yeast).